The sequence spans 92 residues: Small ribosomal subunit protein uS19 (92 aa).

The protein belongs to the universal ribosomal protein uS19 family.

In terms of biological role, protein S19 forms a complex with S13 that binds strongly to the 16S ribosomal RNA. The protein is Small ribosomal subunit protein uS19 of Baumannia cicadellinicola subsp. Homalodisca coagulata.